The following is a 364-amino-acid chain: Histidinol-phosphate aminotransferase (364 aa).

N6-(pyridoxal phosphate)lysine is present on Lys226.

This sequence belongs to the class-II pyridoxal-phosphate-dependent aminotransferase family. Histidinol-phosphate aminotransferase subfamily. Homodimer. Pyridoxal 5'-phosphate serves as cofactor.

The catalysed reaction is L-histidinol phosphate + 2-oxoglutarate = 3-(imidazol-4-yl)-2-oxopropyl phosphate + L-glutamate. It functions in the pathway amino-acid biosynthesis; L-histidine biosynthesis; L-histidine from 5-phospho-alpha-D-ribose 1-diphosphate: step 7/9. The chain is Histidinol-phosphate aminotransferase from Campylobacter jejuni subsp. jejuni serotype O:6 (strain 81116 / NCTC 11828).